Here is a 303-residue protein sequence, read N- to C-terminus: Recombination-associated protein RdgC (303 aa).

Belongs to the RdgC family.

The protein localises to the cytoplasm. It is found in the nucleoid. Its function is as follows. May be involved in recombination. In Enterobacter sp. (strain 638), this protein is Recombination-associated protein RdgC.